A 251-amino-acid chain; its full sequence is Hydroxyacylglutathione hydrolase (251 aa).

Positions 53, 55, 57, 58, 110, 127, and 165 each coordinate Zn(2+).

It belongs to the metallo-beta-lactamase superfamily. Glyoxalase II family. In terms of assembly, monomer. It depends on Zn(2+) as a cofactor.

The enzyme catalyses an S-(2-hydroxyacyl)glutathione + H2O = a 2-hydroxy carboxylate + glutathione + H(+). It participates in secondary metabolite metabolism; methylglyoxal degradation; (R)-lactate from methylglyoxal: step 2/2. Thiolesterase that catalyzes the hydrolysis of S-D-lactoyl-glutathione to form glutathione and D-lactic acid. This chain is Hydroxyacylglutathione hydrolase, found in Shigella boydii serotype 18 (strain CDC 3083-94 / BS512).